Consider the following 70-residue polypeptide: Large ribosomal subunit protein eL38 (70 aa).

The protein belongs to the eukaryotic ribosomal protein eL38 family.

This Ostertagia ostertagi (Brown stomach worm) protein is Large ribosomal subunit protein eL38 (rpl-38).